A 232-amino-acid polypeptide reads, in one-letter code: Sugar fermentation stimulation protein homolog (232 aa).

It belongs to the SfsA family.

The sequence is that of Sugar fermentation stimulation protein homolog from Geobacter sulfurreducens (strain ATCC 51573 / DSM 12127 / PCA).